The following is a 199-amino-acid chain: Probable nicotinate-nucleotide adenylyltransferase (199 aa).

It belongs to the NadD family.

It catalyses the reaction nicotinate beta-D-ribonucleotide + ATP + H(+) = deamido-NAD(+) + diphosphate. It functions in the pathway cofactor biosynthesis; NAD(+) biosynthesis; deamido-NAD(+) from nicotinate D-ribonucleotide: step 1/1. Catalyzes the reversible adenylation of nicotinate mononucleotide (NaMN) to nicotinic acid adenine dinucleotide (NaAD). The chain is Probable nicotinate-nucleotide adenylyltransferase from Roseiflexus castenholzii (strain DSM 13941 / HLO8).